Reading from the N-terminus, the 285-residue chain is MGMAMSENLLRYGNVAKPLVLYNRTREKAEAHSSRLGDCEVANSLPAAVSVSDIIWLCLQDQTAVEETFQEILPAEIRSKLFVDSSTTNPETADSIARRLSDRGAFFVALPVMGGPPLALSRSLTCIASGDRESVDRIRPYIEGVGEKPGAALLLKLLGNFLIMATIETVAEAHAFAEKCGIDTTNMDKLLRAVFPLPPHALYNRQMVTGECFSGKPLVEVSKALQLTGHVMEMAKKHGASVKIYEIARQHLEIVQENAGPDADITAIYGAVRMESGLPFSTITE.

Residue Thr-87 participates in NAD(+) binding. Residue Lys-156 is part of the active site.

Belongs to the HIBADH-related family. NP60 subfamily.

It functions in the pathway secondary metabolite biosynthesis. Its function is as follows. Nonribosomal peptide synthetase that mediates the biosynthesis of usterphenyllins and uscandidusins, p-terphenyl derivatives. Within the pathway, ucdB alone catalyzes both reduction and dehydration of atromentin to form a terphenyl triol intermediate. The pathway begin with the biosynthesis of 4-hydroxyphenylpyruvate (HPPA) from L-tyrosine, possibly by the aminotransferase ucdG. The nonribosomal peptide synthetase ucdA then condenses two HPPA units to produce atromentin. The key step in this pathway is the reduction and dehydration of atromentin to form a terphenyl triol intermediate, performed by the NAD-dependent dehydrogenase ucdB. Further O-methylation by the methyltransferase ucdC forms terphenyllin carrying two methoxy moieties at C-9 and C-12, and subsequent dihydroxylation at C-3 of ring A and C-15 of ring C by the flavin-dependent oxygenase ucdD leads to 3,15-dihydroxyterphenyllin. Prenylation by ucdE at position C-5 of ring A forms usterphenyllin B, and is followed by a second prenylation at position C-14 of ring C to form usterphenyllin A. The following furan ring formation that leads to uscandidusins A and B was proven to be an unexpected spontaneous non-enzymatic reaction. This Aspergillus ustus protein is NADH-dependent oxidoreductase ucdB.